The primary structure comprises 293 residues: Elongation factor Ts (293 aa).

Positions 79–82 (TDFV) are involved in Mg(2+) ion dislocation from EF-Tu.

It belongs to the EF-Ts family.

The protein localises to the cytoplasm. In terms of biological role, associates with the EF-Tu.GDP complex and induces the exchange of GDP to GTP. It remains bound to the aminoacyl-tRNA.EF-Tu.GTP complex up to the GTP hydrolysis stage on the ribosome. This chain is Elongation factor Ts, found in Bacillus licheniformis (strain ATCC 14580 / DSM 13 / JCM 2505 / CCUG 7422 / NBRC 12200 / NCIMB 9375 / NCTC 10341 / NRRL NRS-1264 / Gibson 46).